We begin with the raw amino-acid sequence, 377 residues long: Nitric oxide reductase FlRd-NAD(+) reductase (377 aa).

It belongs to the FAD-dependent oxidoreductase family. It depends on FAD as a cofactor.

It localises to the cytoplasm. The enzyme catalyses 2 reduced [nitric oxide reductase rubredoxin domain] + NAD(+) + H(+) = 2 oxidized [nitric oxide reductase rubredoxin domain] + NADH. It participates in nitrogen metabolism; nitric oxide reduction. In terms of biological role, one of at least two accessory proteins for anaerobic nitric oxide (NO) reductase. Reduces the rubredoxin moiety of NO reductase. The sequence is that of Nitric oxide reductase FlRd-NAD(+) reductase from Enterobacter sp. (strain 638).